The following is a 702-amino-acid chain: Elongation factor G (702 aa).

A tr-type G domain is found at Glu8–Val290. GTP-binding positions include Ala17–Thr24, Asp88–His92, and Asn142–Asp145.

The protein belongs to the TRAFAC class translation factor GTPase superfamily. Classic translation factor GTPase family. EF-G/EF-2 subfamily.

Its subcellular location is the cytoplasm. Catalyzes the GTP-dependent ribosomal translocation step during translation elongation. During this step, the ribosome changes from the pre-translocational (PRE) to the post-translocational (POST) state as the newly formed A-site-bound peptidyl-tRNA and P-site-bound deacylated tRNA move to the P and E sites, respectively. Catalyzes the coordinated movement of the two tRNA molecules, the mRNA and conformational changes in the ribosome. This is Elongation factor G from Janthinobacterium sp. (strain Marseille) (Minibacterium massiliensis).